The chain runs to 422 residues: UDP-N-acetylglucosamine 1-carboxyvinyltransferase (422 aa).

K22 to N23 lines the phosphoenolpyruvate pocket. R95 is a binding site for UDP-N-acetyl-alpha-D-glucosamine. C119 acts as the Proton donor in catalysis. C119 carries the 2-(S-cysteinyl)pyruvic acid O-phosphothioketal modification. UDP-N-acetyl-alpha-D-glucosamine is bound by residues R124–Q128, D309, and V331.

Belongs to the EPSP synthase family. MurA subfamily.

The protein resides in the cytoplasm. The enzyme catalyses phosphoenolpyruvate + UDP-N-acetyl-alpha-D-glucosamine = UDP-N-acetyl-3-O-(1-carboxyvinyl)-alpha-D-glucosamine + phosphate. The protein operates within cell wall biogenesis; peptidoglycan biosynthesis. Its function is as follows. Cell wall formation. Adds enolpyruvyl to UDP-N-acetylglucosamine. This is UDP-N-acetylglucosamine 1-carboxyvinyltransferase from Anaeromyxobacter sp. (strain K).